We begin with the raw amino-acid sequence, 248 residues long: Deoxyribose-phosphate aldolase (248 aa).

Asp-117 functions as the Proton donor/acceptor in the catalytic mechanism. Lys-179 (schiff-base intermediate with acetaldehyde) is an active-site residue. The active-site Proton donor/acceptor is the Lys-208.

This sequence belongs to the DeoC/FbaB aldolase family. DeoC type 1 subfamily.

The protein localises to the cytoplasm. The enzyme catalyses 2-deoxy-D-ribose 5-phosphate = D-glyceraldehyde 3-phosphate + acetaldehyde. Its pathway is carbohydrate degradation; 2-deoxy-D-ribose 1-phosphate degradation; D-glyceraldehyde 3-phosphate and acetaldehyde from 2-deoxy-alpha-D-ribose 1-phosphate: step 2/2. Functionally, catalyzes a reversible aldol reaction between acetaldehyde and D-glyceraldehyde 3-phosphate to generate 2-deoxy-D-ribose 5-phosphate. In Thermotoga sp. (strain RQ2), this protein is Deoxyribose-phosphate aldolase.